Consider the following 168-residue polypeptide: Group IIF secretory phospholipase A2 (168 aa).

Positions 1–20 (MKKFFAIAVLAGSVVTTAHS) are cleaved as a signal peptide. 7 disulfide bridges follow: cysteine 46–cysteine 138, cysteine 48–cysteine 64, cysteine 63–cysteine 120, cysteine 69–cysteine 145, cysteine 70–cysteine 113, cysteine 79–cysteine 106, and cysteine 98–cysteine 111. Residues tyrosine 47, glycine 49, and glycine 51 each coordinate Ca(2+). Histidine 67 is a catalytic residue. Aspartate 68 contacts Ca(2+). 2 N-linked (GlcNAc...) asparagine glycosylation sites follow: asparagine 92 and asparagine 102. The active site involves aspartate 114. The interval 139–168 (QGPTPNCSIYDPYPEEVTCGHGLPATPVST) is required for localization on the plasma membrane. An N-linked (GlcNAc...) asparagine glycan is attached at asparagine 144.

This sequence belongs to the phospholipase A2 family. The cofactor is Ca(2+). As to expression, strongly expressed in testis.

Its subcellular location is the secreted. The protein resides in the cell membrane. It carries out the reaction a 1,2-diacyl-sn-glycero-3-phosphocholine + H2O = a 1-acyl-sn-glycero-3-phosphocholine + a fatty acid + H(+). The enzyme catalyses 1-hexadecanoyl-2-(9Z-octadecenoyl)-sn-glycero-3-phospho-(1'-sn-glycerol) + H2O = 1-hexadecanoyl-sn-glycero-3-phospho-(1'-sn-glycerol) + (9Z)-octadecenoate + H(+). The catalysed reaction is 1-hexadecanoyl-2-(9Z,12Z-octadecadienoyl)-sn-glycero-3-phosphoethanolamine + H2O = 1-hexadecanoyl-sn-glycero-3-phosphoethanolamine + (9Z,12Z)-octadecadienoate + H(+). It catalyses the reaction 1-hexadecanoyl-2-(5Z,8Z,11Z,14Z-eicosatetraenoyl)-sn-glycero-3-phosphoethanolamine + H2O = 1-hexadecanoyl-sn-glycero-3-phosphoethanolamine + (5Z,8Z,11Z,14Z)-eicosatetraenoate + H(+). It carries out the reaction 1-hexadecanoyl-2-(9Z-octadecenoyl)-sn-glycero-3-phosphocholine + H2O = 1-hexadecanoyl-sn-glycero-3-phosphocholine + (9Z)-octadecenoate + H(+). The enzyme catalyses 1-hexadecanoyl-2-(9Z-octadecenoyl)-sn-glycero-3-phospho-L-serine + H2O = 1-hexadecanoyl-sn-glycero-3-phospho-L-serine + (9Z)-octadecenoate + H(+). Its function is as follows. Secretory calcium-dependent phospholipase A2 that primarily targets extracellular phospholipids. Hydrolyzes the ester bond of the fatty acyl group attached at the sn-2 position of phospholipids (phospholipase A2 activity), the catalytic efficiency decreasing in the following order: phosphatidylglycerols &gt; phosphatidylethanolamines &gt; phosphatidylcholines &gt; phosphatidylserines. May play a role in lipid mediator production in inflammatory conditions, by providing arachidonic acid to downstream cyclooxygenases and lipoxygenases. This Mus musculus (Mouse) protein is Group IIF secretory phospholipase A2 (Pla2g2f).